Here is a 533-residue protein sequence, read N- to C-terminus: Calcium/calmodulin-dependent protein kinase type II subunit delta (533 aa).

Ala-2 is modified (N-acetylalanine). Positions Tyr-14–Ile-272 constitute a Protein kinase domain. Residues Leu-20–Val-28 and Lys-43 each bind ATP. Asp-136 serves as the catalytic Proton acceptor. The tract at residues His-283–Lys-292 is autoinhibitory domain. Position 287 is a phosphothreonine; by autocatalysis (Thr-287). The calmodulin-binding stretch occupies residues Leu-291–Lys-301. A phosphothreonine; by autocatalysis mark is found at Thr-306 and Thr-307. Ser-315 carries the phosphoserine modification. N6-acetyllysine is present on Lys-318. Residues Ser-319 and Ser-364 each carry the phosphoserine modification. Residues Thr-337–Glu-375 form a disordered region. Thr-365 carries the post-translational modification Phosphothreonine. At Ser-367 the chain carries Phosphoserine. 2 positions are modified to phosphothreonine: Thr-370 and Thr-371. Residues Ser-438, Ser-524, and Ser-528 each carry the phosphoserine modification.

It belongs to the protein kinase superfamily. CAMK Ser/Thr protein kinase family. CaMK subfamily. CAMK2 is composed of 4 different chains: alpha (CAMK2A), beta (CAMK2B), gamma (CAMK2G), and delta (CAMK2D). The different isoforms assemble into homo- or heteromultimeric holoenzymes composed of 12 subunits with two hexameric rings stacked one on top of the other. Interacts with RRAD and CACNB2. Autophosphorylation of Thr-287 following activation by Ca(2+)/calmodulin. Phosphorylation of Thr-287 locks the kinase into an activated state. As to expression, expressed in liver.

Its subcellular location is the cell membrane. It localises to the sarcolemma. It is found in the sarcoplasmic reticulum membrane. The catalysed reaction is L-seryl-[protein] + ATP = O-phospho-L-seryl-[protein] + ADP + H(+). It carries out the reaction L-threonyl-[protein] + ATP = O-phospho-L-threonyl-[protein] + ADP + H(+). With respect to regulation, activated by Ca(2+)/calmodulin. Binding of calmodulin results in conformational change that relieves intrasteric autoinhibition and allows autophosphorylation of Thr-287 which turns the kinase in a constitutively active form and confers to the kinase a Ca(2+)-independent activity. Functionally, calcium/calmodulin-dependent protein kinase involved in the regulation of Ca(2+) homeostatis and excitation-contraction coupling (ECC) in heart by targeting ion channels, transporters and accessory proteins involved in Ca(2+) influx into the myocyte, Ca(2+) release from the sarcoplasmic reticulum (SR), SR Ca(2+) uptake and Na(+) and K(+) channel transport. Targets also transcription factors and signaling molecules to regulate heart function. In its activated form, is involved in the pathogenesis of dilated cardiomyopathy and heart failure. Contributes to cardiac decompensation and heart failure by regulating SR Ca(2+) release via direct phosphorylation of RYR2 Ca(2+) channel on 'Ser-2808'. In the nucleus, phosphorylates the MEF2 repressor HDAC4, promoting its nuclear export and binding to 14-3-3 protein, and expression of MEF2 and genes involved in the hypertrophic program. Is essential for left ventricular remodeling responses to myocardial infarction. In pathological myocardial remodeling acts downstream of the beta adrenergic receptor signaling cascade to regulate key proteins involved in ECC. Regulates Ca(2+) influx to myocytes by binding and phosphorylating the L-type Ca(2+) channel subunit beta-2 CACNB2. In addition to Ca(2+) channels, can target and regulate the cardiac sarcolemmal Na(+) channel Nav1.5/SCN5A and the K+ channel Kv4.3/KCND3, which contribute to arrhythmogenesis in heart failure. Phosphorylates phospholamban (PLN/PLB), an endogenous inhibitor of SERCA2A/ATP2A2, contributing to the enhancement of SR Ca(2+) uptake that may be important in frequency-dependent acceleration of relaxation (FDAR) and maintenance of contractile function during acidosis. May participate in the modulation of skeletal muscle function in response to exercise, by regulating SR Ca(2+) transport through phosphorylation of PLN/PLB and triadin, a ryanodine receptor-coupling factor. In response to interferon-gamma (IFN-gamma) stimulation, catalyzes phosphorylation of STAT1, stimulating the JAK-STAT signaling pathway. The polypeptide is Calcium/calmodulin-dependent protein kinase type II subunit delta (CAMK2D) (Oryctolagus cuniculus (Rabbit)).